The sequence spans 161 residues: Heme transporter hrg-6 (161 aa).

The next 4 membrane-spanning stretches (helical) occupy residues 13–33 (IAYTICGIIIGLFWACVYIFA), 38–58 (VALAACLTATAFAFETFYFYL), 75–95 (VLFWINLIVGFLSIGGMITAI), and 115–135 (WWSTATWFLVMLKWTWQNAFI).

It belongs to the HRG family.

It localises to the membrane. Its function is as follows. Heme transporter. This Caenorhabditis elegans protein is Heme transporter hrg-6 (hrg-6).